Reading from the N-terminus, the 917-residue chain is Dolichyl-phosphooligosaccharide-protein glycotransferase (917 aa).

Over residues 1–10 the composition is skewed to basic and acidic residues; that stretch reads MTENNEKVKN. The disordered stretch occupies residues 1-20; sequence MTENNEKVKNSDSANNQSSK. Residues 1 to 38 lie on the Cytoplasmic side of the membrane; sequence MTENNEKVKNSDSANNQSSKNSKFNFNFEDKKVKCAKT. Residues 11–20 show a composition bias toward low complexity; it reads SDSANNQSSK. A helical transmembrane segment spans residues 39-59; sequence ILIIIFLAFLSFQMRAQTADM. At 60 to 154 the chain is on the extracellular side; it reads GFTTNEQYLD…AMDSTVTLMN (95 aa). The DXD motif 1 signature appears at 82-84; the sequence is ALD. Asp84 contributes to the Mn(2+) binding site. Residues 155 to 175 form a helical membrane-spanning segment; sequence AAFWVPAILSMFLITPIFFTV. The Cytoplasmic portion of the chain corresponds to 176–182; the sequence is RRITSSD. Residues 183-203 form a helical membrane-spanning segment; it reads IGGAVAAILASLSPSIFVKTV. The Extracellular segment spans residues 204 to 209; it reads AGFSDT. A Mn(2+)-binding site is contributed by Asp208. The DXD motif 2 signature appears at 208–210; the sequence is DTP. Residues 210–230 form a helical membrane-spanning segment; that stretch reads PILEILPLLFIVWFIIEAIHY. The Cytoplasmic portion of the chain corresponds to 231-237; the sequence is SKEKNYK. The helical transmembrane segment at 238-260 threads the bilayer; sequence SLIYGLLATLMLALYPFMWSAWW. Residues 261–263 lie on the Extracellular side of the membrane; it reads YGY. The helical transmembrane segment at 264–286 threads the bilayer; the sequence is YIVIAFLVIYAIYKGISYNSIAK. At 287 to 308 the chain is on the cytoplasmic side; sequence YTKSKNNNHKDKIESEKLEMLN. The helical transmembrane segment at 309 to 329 threads the bilayer; it reads ILKISGLFIIGGAVLITALYG. Over 330 to 372 the chain is Extracellular; that stretch reads VSTTMNALQAPLNYLGLDEVSSQTGWPNVLTTVSELDTASLDE. The short motif at 361-364 is the TIXE motif element; the sequence is TVSE. A Mn(2+)-binding site is contributed by Glu364. Residues 373-393 traverse the membrane as a helical segment; sequence IISSSLGSIHLFAIGLIGIFL. Residues 394–413 are Cytoplasmic-facing; the sequence is SLFRKVLTPVKQISNGLAEK. Residues 414–434 form a helical membrane-spanning segment; that stretch reads LDIKYALLLIIWFAVTFLAAS. The Extracellular portion of the chain corresponds to 435–438; it reads KGVR. Residue Arg438 coordinates a glycophospholipid. The helical transmembrane segment at 439-459 threads the bilayer; that stretch reads FVALMVPPLSIGVGIFVGFIE. Residues 460–469 are Cytoplasmic-facing; sequence QFIKNNLDKK. A helical transmembrane segment spans residues 470-490; it reads YEYVAYPTIAIIVLYALFTIY. Topologically, residues 491 to 506 are extracellular; the sequence is RADSADLVRMLLPSNY. Residues 507 to 527 form a helical membrane-spanning segment; the sequence is VPIAEGIMLASLAVLIIYKVA. Topologically, residues 528 to 541 are cytoplasmic; it reads ELIAESNKKLVMNK. A helical membrane pass occupies residues 542–562; that stretch reads IFMILLAIGLITPTIATIVPF. Topologically, residues 563-917 are extracellular; sequence YSVPTYNDGW…FSVDYGNYSK (355 aa). Positions 592 to 594 are interacts with target acceptor peptide in protein substrate; that stretch reads WWD. Positions 592–596 match the WWDYG motif motif; the sequence is WWDNG. An MI motif motif is present at residues 719 to 726; sequence MTSIASVW.

This sequence belongs to the STT3 family. The cofactor is Mn(2+). Requires Mg(2+) as cofactor.

The protein resides in the cell membrane. The catalysed reaction is an archaeal dolichyl phosphooligosaccharide + [protein]-L-asparagine = an archaeal dolichyl phosphate + a glycoprotein with the oligosaccharide chain attached by N-beta-D-glycosyl linkage to a protein L-asparagine.. It participates in cell surface structure biogenesis; S-layer biogenesis. The protein operates within protein modification; protein glycosylation. In terms of biological role, oligosaccharyl transferase (OST) that catalyzes the initial transfer of a defined glycan (ManNAcGlc-2,3-diNAcAGlcNAc in M.voltae) from the lipid carrier dolichol-monophosphate to an asparagine residue within an Asn-X-Ser/Thr consensus motif in nascent polypeptide chains, the first step in protein N-glycosylation. Involved in the assembly of an N-linked disaccharide that decorates the S-layer glycoprotein and flagellins. The chain is Dolichyl-phosphooligosaccharide-protein glycotransferase from Methanococcus voltae.